The chain runs to 166 residues: Interferon gamma (166 aa).

Residues 1 to 23 (MKYTSYILAFQLCIVLGSLGCYC) form the signal peptide. Gln24 carries the post-translational modification Pyrrolidone carboxylic acid. Residues Asn48, Asn86, and Asn120 are each glycosylated (N-linked (GlcNAc...) asparagine).

This sequence belongs to the type II (or gamma) interferon family. In terms of assembly, homodimer. Interacts with IFNGR1 (via extracellular domain); this interaction promotes IFNGR1 dimerization. In terms of tissue distribution, released primarily from activated T lymphocytes.

Its subcellular location is the secreted. Its function is as follows. Type II interferon produced by immune cells such as T-cells and NK cells that plays crucial roles in antimicrobial, antiviral, and antitumor responses by activating effector immune cells and enhancing antigen presentation. Primarily signals through the JAK-STAT pathway after interaction with its receptor IFNGR1 to affect gene regulation. Upon IFNG binding, IFNGR1 intracellular domain opens out to allow association of downstream signaling components JAK2, JAK1 and STAT1, leading to STAT1 activation, nuclear translocation and transcription of IFNG-regulated genes. Many of the induced genes are transcription factors such as IRF1 that are able to further drive regulation of a next wave of transcription. Plays a role in class I antigen presentation pathway by inducing a replacement of catalytic proteasome subunits with immunoproteasome subunits. In turn, increases the quantity, quality, and repertoire of peptides for class I MHC loading. Increases the efficiency of peptide generation also by inducing the expression of activator PA28 that associates with the proteasome and alters its proteolytic cleavage preference. Up-regulates as well MHC II complexes on the cell surface by promoting expression of several key molecules such as cathepsins B/CTSB, H/CTSH, and L/CTSL. Participates in the regulation of hematopoietic stem cells during development and under homeostatic conditions by affecting their development, quiescence, and differentiation. The protein is Interferon gamma (IFNG) of Saimiri sciureus (Common squirrel monkey).